The chain runs to 130 residues: Small ribosomal subunit protein uS8 (130 aa).

Belongs to the universal ribosomal protein uS8 family. Part of the 30S ribosomal subunit. Contacts proteins S5 and S12.

One of the primary rRNA binding proteins, it binds directly to 16S rRNA central domain where it helps coordinate assembly of the platform of the 30S subunit. This chain is Small ribosomal subunit protein uS8, found in Pseudomonas syringae pv. tomato (strain ATCC BAA-871 / DC3000).